A 534-amino-acid chain; its full sequence is 2,3-bisphosphoglycerate-independent phosphoglycerate mutase (534 aa).

D15 and S65 together coordinate Mn(2+). S65 functions as the Phosphoserine intermediate in the catalytic mechanism. Substrate is bound by residues H126, 156 to 157 (RD), R188, R194, 261 to 264 (RPDR), and K334. Residues D401, H405, D442, H443, and H460 each coordinate Mn(2+).

This sequence belongs to the BPG-independent phosphoglycerate mutase family. It depends on Mn(2+) as a cofactor.

Its subcellular location is the plastid. The protein localises to the chloroplast. The enzyme catalyses (2R)-2-phosphoglycerate = (2R)-3-phosphoglycerate. It participates in carbohydrate degradation; glycolysis; pyruvate from D-glyceraldehyde 3-phosphate: step 3/5. Catalyzes the interconversion of 2-phosphoglycerate and 3-phosphoglycerate. In Pyropia yezoensis (Susabi-nori), this protein is 2,3-bisphosphoglycerate-independent phosphoglycerate mutase.